We begin with the raw amino-acid sequence, 111 residues long: Gene 81 protein (111 aa).

The chain is Gene 81 protein (81) from Mycobacterium (Mycobacteriophage L5).